The chain runs to 615 residues: Probable transporter mch1 (615 aa).

Positions 1–35 (MTGSIGQAPAIDKRDFDINRRSSTPHETAAQEDEA) are disordered. Over residues 11–20 (IDKRDFDINR) the composition is skewed to basic and acidic residues. The chain crosses the membrane as a helical span at residues 84 to 104 (FVWGVITCLGAGSITAFSLYG). N-linked (GlcNAc...) asparagine glycosylation occurs at Asn-112. 5 helical membrane passes run 120 to 140 (EVSI…GYLC), 147 to 167 (PLTL…AFVY), 182 to 202 (FWVM…MYLA), 218 to 238 (GIIL…QSQV), and 261 to 281 (FLFL…ALRI). An N-linked (GlcNAc...) asparagine glycan is attached at Asn-329. Transmembrane regions (helical) follow at residues 371 to 391 (IFLA…VTGP), 428 to 448 (IIAL…DLFA), 477 to 497 (LAFL…LASP), 512 to 532 (LVGL…SVVW), 538 to 558 (GTNW…WGVI), and 583 to 603 (FGFW…AWLV).

Belongs to the major facilitator superfamily.

The protein localises to the vacuole membrane. Probable transporter. The sequence is that of Probable transporter mch1 (mch1) from Emericella nidulans (strain FGSC A4 / ATCC 38163 / CBS 112.46 / NRRL 194 / M139) (Aspergillus nidulans).